A 58-amino-acid chain; its full sequence is uncharacterized protein (58 aa).

Positions 3-52 form a coiled coil; that stretch reads KVILEHLQRIEKQLEILNSKIENFLGFEELSEEELKELDEIEAKMEKGEK.

This is an uncharacterized protein from Archaeoglobus fulgidus (strain ATCC 49558 / DSM 4304 / JCM 9628 / NBRC 100126 / VC-16).